Consider the following 232-residue polypeptide: Large ribosomal subunit protein uL1 (232 aa).

This sequence belongs to the universal ribosomal protein uL1 family. In terms of assembly, part of the 50S ribosomal subunit.

Binds directly to 23S rRNA. The L1 stalk is quite mobile in the ribosome, and is involved in E site tRNA release. In terms of biological role, protein L1 is also a translational repressor protein, it controls the translation of the L11 operon by binding to its mRNA. The sequence is that of Large ribosomal subunit protein uL1 from Coxiella burnetii (strain RSA 331 / Henzerling II).